A 345-amino-acid polypeptide reads, in one-letter code: Anthranilate phosphoribosyltransferase (345 aa).

5-phospho-alpha-D-ribose 1-diphosphate contacts are provided by residues Gly75, 78–79, Ser83, 85–88, 103–111, and Gly115; these read GD, NIST, and KHGNRAASS. Position 75 (Gly75) interacts with anthranilate. Ser87 contributes to the Mg(2+) binding site. Anthranilate is bound at residue Asn106. Position 161 (Arg161) interacts with anthranilate. Mg(2+) contacts are provided by Asp219 and Glu220.

It belongs to the anthranilate phosphoribosyltransferase family. Homodimer. The cofactor is Mg(2+).

The enzyme catalyses N-(5-phospho-beta-D-ribosyl)anthranilate + diphosphate = 5-phospho-alpha-D-ribose 1-diphosphate + anthranilate. It participates in amino-acid biosynthesis; L-tryptophan biosynthesis; L-tryptophan from chorismate: step 2/5. Catalyzes the transfer of the phosphoribosyl group of 5-phosphorylribose-1-pyrophosphate (PRPP) to anthranilate to yield N-(5'-phosphoribosyl)-anthranilate (PRA). The polypeptide is Anthranilate phosphoribosyltransferase (Nocardia farcinica (strain IFM 10152)).